The sequence spans 308 residues: Ornithine carbamoyltransferase (308 aa).

Carbamoyl phosphate contacts are provided by residues 55-58 (STRT), Q82, R106, and 133-136 (HPCQ). L-ornithine contacts are provided by residues N164, D227, and 231–232 (SM). Residues 267 to 268 (CL) and R295 contribute to the carbamoyl phosphate site.

This sequence belongs to the aspartate/ornithine carbamoyltransferase superfamily. OTCase family.

It localises to the cytoplasm. The catalysed reaction is carbamoyl phosphate + L-ornithine = L-citrulline + phosphate + H(+). It functions in the pathway amino-acid biosynthesis; L-arginine biosynthesis; L-arginine from L-ornithine and carbamoyl phosphate: step 1/3. Reversibly catalyzes the transfer of the carbamoyl group from carbamoyl phosphate (CP) to the N(epsilon) atom of ornithine (ORN) to produce L-citrulline. In Prochlorococcus marinus subsp. pastoris (strain CCMP1986 / NIES-2087 / MED4), this protein is Ornithine carbamoyltransferase.